Reading from the N-terminus, the 277-residue chain is Shikimate dehydrogenase (NADP(+)) (277 aa).

Shikimate is bound by residues 15-17 (SLS) and threonine 62. Lysine 66 acts as the Proton acceptor in catalysis. Shikimate contacts are provided by asparagine 87 and aspartate 102. NADP(+) contacts are provided by residues 127–131 (GAGGA) and isoleucine 219. Shikimate is bound at residue tyrosine 221. Glycine 242 is an NADP(+) binding site.

The protein belongs to the shikimate dehydrogenase family. In terms of assembly, homodimer.

The catalysed reaction is shikimate + NADP(+) = 3-dehydroshikimate + NADPH + H(+). It functions in the pathway metabolic intermediate biosynthesis; chorismate biosynthesis; chorismate from D-erythrose 4-phosphate and phosphoenolpyruvate: step 4/7. In terms of biological role, involved in the biosynthesis of the chorismate, which leads to the biosynthesis of aromatic amino acids. Catalyzes the reversible NADPH linked reduction of 3-dehydroshikimate (DHSA) to yield shikimate (SA). This chain is Shikimate dehydrogenase (NADP(+)), found in Bacillus cytotoxicus (strain DSM 22905 / CIP 110041 / 391-98 / NVH 391-98).